Reading from the N-terminus, the 225-residue chain is Urease accessory protein UreG 2 (225 aa).

Position 31 to 38 (31 to 38) interacts with GTP; that stretch reads GPVGSGKT.

The protein belongs to the SIMIBI class G3E GTPase family. UreG subfamily. As to quaternary structure, homodimer. UreD, UreF and UreG form a complex that acts as a GTP-hydrolysis-dependent molecular chaperone, activating the urease apoprotein by helping to assemble the nickel containing metallocenter of UreC. The UreE protein probably delivers the nickel.

The protein localises to the cytoplasm. Its function is as follows. Facilitates the functional incorporation of the urease nickel metallocenter. This process requires GTP hydrolysis, probably effectuated by UreG. This is Urease accessory protein UreG 2 from Streptomyces griseus subsp. griseus (strain JCM 4626 / CBS 651.72 / NBRC 13350 / KCC S-0626 / ISP 5235).